The chain runs to 484 residues: MDFLSILPPQRHCTSELCDNDESVQAIISALEYTGLAKILTETFSADEFVEALDARLLYIAHIILSCKETNVPINTDTFLCPLAERIKVDVDDLNAGSLKCMKVLLHHCTNRYFIKIVEKMTRGQSSNLLWFLVRNELVTGSSVVKQCSYKPGLNSVAHGIFRPASRFEVFGKVHEPIVRDVIATFVERRPIPVSETLGLLIDPFSGTFGASIDLCYGIEEHDDGFVTVGERAHVYEIKCMARYIYSAADVEGFLDNPTLKGFASLIKGATFPLIEHRLPGATPSSGAHIVSHDRMFETNRKRKSIYESNDYVRRLLNINRGVKSTVYIFREKPQPDERDKLTLECLAKFTANIFLNARHKYFDQTSMQYFVVTQHYINDHPDPECIEPDTLPRVSVVTALFKTRNIGTHHSLEVNHKTYPNSAIPFALIVTPVAFDAEILSVFLRETFDNYAQQVYNKSKIRLWDPNFLRGFVASHRELEKTP.

This sequence belongs to the herpesviridae alkaline nuclease family. As to quaternary structure, interacts with major DNA-binding protein; this interaction increases the nuclease processivity of the alkaline exonuclease.

The protein resides in the host nucleus. The protein localises to the host cytoplasm. Plays a role in processing non linear or branched viral DNA intermediates in order to promote the production of mature packaged unit-length linear progeny viral DNA molecules. Exhibits endonuclease and exonuclease activities and accepts both double-stranded and single-stranded DNA as substrate. Exonuclease digestion of DNA is in the 5'-&gt; 3' direction and the products are 5'-monophosphate nucleosides. Additionally, forms a recombinase with the major DNA-binding protein, which displays strand exchange activity. The polypeptide is Alkaline nuclease (Elephas maximus (Indian elephant)).